A 357-amino-acid polypeptide reads, in one-letter code: Alanine racemase (357 aa).

Lys-33 serves as the catalytic Proton acceptor; specific for D-alanine. Lys-33 is modified (N6-(pyridoxal phosphate)lysine). Arg-129 is a substrate binding site. The active-site Proton acceptor; specific for L-alanine is Tyr-253. Met-301 serves as a coordination point for substrate.

It belongs to the alanine racemase family. The cofactor is pyridoxal 5'-phosphate.

The catalysed reaction is L-alanine = D-alanine. Its pathway is amino-acid biosynthesis; D-alanine biosynthesis; D-alanine from L-alanine: step 1/1. Catalyzes the interconversion of L-alanine and D-alanine. May also act on other amino acids. The chain is Alanine racemase (alr) from Pseudomonas entomophila (strain L48).